A 178-amino-acid polypeptide reads, in one-letter code: Large ribosomal subunit protein uL6 (178 aa).

The protein belongs to the universal ribosomal protein uL6 family. Part of the 50S ribosomal subunit.

In terms of biological role, this protein binds to the 23S rRNA, and is important in its secondary structure. It is located near the subunit interface in the base of the L7/L12 stalk, and near the tRNA binding site of the peptidyltransferase center. The polypeptide is Large ribosomal subunit protein uL6 (Buchnera aphidicola subsp. Acyrthosiphon pisum (strain APS) (Acyrthosiphon pisum symbiotic bacterium)).